Consider the following 335-residue polypeptide: Biotin synthase (335 aa).

The disordered stretch occupies residues 1 to 20 (MVSVGTQSHSGRDQAEQNPS). A Radical SAM core domain is found at 59–284 (GHLQKSSLLS…MMPQSMVRLS (226 aa)). Cysteine 74, cysteine 78, and cysteine 81 together coordinate [4Fe-4S] cluster. Residues cysteine 118, cysteine 150, cysteine 210, and arginine 282 each contribute to the [2Fe-2S] cluster site.

The protein belongs to the radical SAM superfamily. Biotin synthase family. As to quaternary structure, homodimer. The cofactor is [4Fe-4S] cluster. [2Fe-2S] cluster is required as a cofactor.

The enzyme catalyses (4R,5S)-dethiobiotin + (sulfur carrier)-SH + 2 reduced [2Fe-2S]-[ferredoxin] + 2 S-adenosyl-L-methionine = (sulfur carrier)-H + biotin + 2 5'-deoxyadenosine + 2 L-methionine + 2 oxidized [2Fe-2S]-[ferredoxin]. Its pathway is cofactor biosynthesis; biotin biosynthesis; biotin from 7,8-diaminononanoate: step 2/2. Catalyzes the conversion of dethiobiotin (DTB) to biotin by the insertion of a sulfur atom into dethiobiotin via a radical-based mechanism. The sequence is that of Biotin synthase from Zymomonas mobilis subsp. mobilis (strain ATCC 31821 / ZM4 / CP4).